The primary structure comprises 434 residues: Trigger factor (434 aa).

Residues Glu-161–Pro-246 form the PPIase FKBP-type domain.

It belongs to the FKBP-type PPIase family. Tig subfamily.

The protein resides in the cytoplasm. It catalyses the reaction [protein]-peptidylproline (omega=180) = [protein]-peptidylproline (omega=0). Involved in protein export. Acts as a chaperone by maintaining the newly synthesized protein in an open conformation. Functions as a peptidyl-prolyl cis-trans isomerase. The chain is Trigger factor from Yersinia pseudotuberculosis serotype O:1b (strain IP 31758).